Here is a 337-residue protein sequence, read N- to C-terminus: Putative F-box protein At4g09870 (337 aa).

Positions 1–46 (MSISELSQDLLEEILCRVPAISLKKLRSTCKLWNSLFIDKRVRNEL) constitute an F-box domain.

This Arabidopsis thaliana (Mouse-ear cress) protein is Putative F-box protein At4g09870.